Reading from the N-terminus, the 93-residue chain is Small ribosomal subunit protein uS19 (93 aa).

It belongs to the universal ribosomal protein uS19 family.

Protein S19 forms a complex with S13 that binds strongly to the 16S ribosomal RNA. The protein is Small ribosomal subunit protein uS19 of Agathobacter rectalis (strain ATCC 33656 / DSM 3377 / JCM 17463 / KCTC 5835 / VPI 0990) (Eubacterium rectale).